The chain runs to 117 residues: MNLEESQSNRGTLNIKKILVIVCMTNKICKHLIQSLLLSKRRLVSVLFDNYQGDMKLRSSPSAIPLVPSTKILQAMEARNDIVDSLIINSHATESDRRTLGDHEVRQCEDTNFGFKI.

This is an uncharacterized protein from Saccharomyces cerevisiae (strain ATCC 204508 / S288c) (Baker's yeast).